Reading from the N-terminus, the 1366-residue chain is DNA-directed RNA polymerase subunit beta (1366 aa).

The protein belongs to the RNA polymerase beta chain family. As to quaternary structure, the RNAP catalytic core consists of 2 alpha, 1 beta, 1 beta' and 1 omega subunit. When a sigma factor is associated with the core the holoenzyme is formed, which can initiate transcription.

The enzyme catalyses RNA(n) + a ribonucleoside 5'-triphosphate = RNA(n+1) + diphosphate. Functionally, DNA-dependent RNA polymerase catalyzes the transcription of DNA into RNA using the four ribonucleoside triphosphates as substrates. This chain is DNA-directed RNA polymerase subunit beta, found in Polynucleobacter asymbioticus (strain DSM 18221 / CIP 109841 / QLW-P1DMWA-1) (Polynucleobacter necessarius subsp. asymbioticus).